The following is a 185-amino-acid chain: Elongation factor P (185 aa).

The protein belongs to the elongation factor P family.

It localises to the cytoplasm. It participates in protein biosynthesis; polypeptide chain elongation. In terms of biological role, involved in peptide bond synthesis. Stimulates efficient translation and peptide-bond synthesis on native or reconstituted 70S ribosomes in vitro. Probably functions indirectly by altering the affinity of the ribosome for aminoacyl-tRNA, thus increasing their reactivity as acceptors for peptidyl transferase. This chain is Elongation factor P, found in Deinococcus radiodurans (strain ATCC 13939 / DSM 20539 / JCM 16871 / CCUG 27074 / LMG 4051 / NBRC 15346 / NCIMB 9279 / VKM B-1422 / R1).